The following is a 626-amino-acid chain: Membrane protein insertase YidC (626 aa).

5 helical membrane passes run 8-28 (LILA…LFPP), 399-419 (MGLA…PLAY), 469-489 (LPIL…FVTL), 527-547 (SIMA…SMWL), and 563-583 (IFAW…SGLL).

The protein belongs to the OXA1/ALB3/YidC family. Type 1 subfamily. As to quaternary structure, interacts with the Sec translocase complex via SecD. Specifically interacts with transmembrane segments of nascent integral membrane proteins during membrane integration.

The protein resides in the cell inner membrane. Functionally, required for the insertion and/or proper folding and/or complex formation of integral membrane proteins into the membrane. Involved in integration of membrane proteins that insert both dependently and independently of the Sec translocase complex, as well as at least some lipoproteins. Aids folding of multispanning membrane proteins. This chain is Membrane protein insertase YidC, found in Jannaschia sp. (strain CCS1).